We begin with the raw amino-acid sequence, 144 residues long: MQLNNLKPAAGSKHAKRRVGRGIGSGLGKTAGRGHKGQKSRSGGFHKVGFEGGQMPLYRRLPKRGFTSLTKAFTAEVSLRDIERLEAAEVDLLVLKQAGLVSDLVKSAKVIKAGELTRKVTIKGLGATAGAKAAIEAAGGQIAE.

Residues Met-1–Val-48 form a disordered region. Residues Arg-21–Ala-31 show a composition bias toward gly residues.

This sequence belongs to the universal ribosomal protein uL15 family. As to quaternary structure, part of the 50S ribosomal subunit.

Binds to the 23S rRNA. This Cupriavidus pinatubonensis (strain JMP 134 / LMG 1197) (Cupriavidus necator (strain JMP 134)) protein is Large ribosomal subunit protein uL15.